Here is a 141-residue protein sequence, read N- to C-terminus: Large ribosomal subunit protein uL11 (141 aa).

This sequence belongs to the universal ribosomal protein uL11 family. Part of the ribosomal stalk of the 50S ribosomal subunit. Interacts with L10 and the large rRNA to form the base of the stalk. L10 forms an elongated spine to which L12 dimers bind in a sequential fashion forming a multimeric L10(L12)X complex. One or more lysine residues are methylated.

Forms part of the ribosomal stalk which helps the ribosome interact with GTP-bound translation factors. This chain is Large ribosomal subunit protein uL11, found in Chlorobium luteolum (strain DSM 273 / BCRC 81028 / 2530) (Pelodictyon luteolum).